A 201-amino-acid chain; its full sequence is Glycerol-3-phosphate acyltransferase (201 aa).

A run of 6 helical transmembrane segments spans residues 10–30, 60–80, 86–106, 116–136, 139–159, and 166–186; these read MLIG…GLIL, LAAA…LIAA, AAIA…WIGF, LGVL…AWIV, LLTR…PIAL, and ALAA…RANI.

This sequence belongs to the PlsY family. As to quaternary structure, probably interacts with PlsX.

It localises to the cell inner membrane. It carries out the reaction an acyl phosphate + sn-glycerol 3-phosphate = a 1-acyl-sn-glycero-3-phosphate + phosphate. It participates in lipid metabolism; phospholipid metabolism. Catalyzes the transfer of an acyl group from acyl-phosphate (acyl-PO(4)) to glycerol-3-phosphate (G3P) to form lysophosphatidic acid (LPA). This enzyme utilizes acyl-phosphate as fatty acyl donor, but not acyl-CoA or acyl-ACP. The sequence is that of Glycerol-3-phosphate acyltransferase from Brucella suis (strain ATCC 23445 / NCTC 10510).